The primary structure comprises 948 residues: ELKS/Rab6-interacting/CAST family member 1 (948 aa).

The segment at Met1–Leu54 is disordered. An N6-acetyllysine modification is found at Lys10. Residues Pro13–Pro28 show a composition bias toward low complexity. Phosphoserine occurs at positions 17, 21, and 37. Thr38 is modified (phosphothreonine). Gly residues predominate over residues Gly40–Gly51. Phosphoserine occurs at positions 55, 75, 94, 796, and 937. A coiled-coil region spans residues Arg144–Glu920. The segment covering Lys773–Ser796 has biased composition (basic and acidic residues). 2 disordered regions span residues Lys773–Ser801 and Gln903–Ala948. The segment covering Asp939–Ala948 has biased composition (acidic residues).

Interacts with the GTB-bound forms of RAB6A isoform 1 and isoform 2 and with RAB6B. The interaction was strongest with RAB6B, followed by RAB6A isoform 2 and weakest with RAB6A isoform 1. Part of a complex with CHUK, IKBKB and IKBKG. Interacts with CHUK, IKBKB and IKBKG. The interaction with IKBKG is independent of CHUK and IKBKB. Interacts with NFKBIA. Isoform 1 interacts through its C-terminus with the PDZ domains of RIMS1 and RIMS2. Interacts with ERC2/CAST1. Interacts with SDCCAG8. Part of a cortical microtubule stabilization complex (CMSC) composed of KANK1, PPFIA1, PPFIBP1, ERC1/ELKS, PHLDB2/LL5beta, CLASPs, KIF21A and possibly additional interactors; within CMSCs KANK1 and PHLDB2/LL5beta appear to be the core components for targeting of microtubule-binding proteins KIF21A and CLASPs, whereas PPFIA1, PPFIBP1 and ERC1/ELKS serve as scaffolds for protein clustering. Isoform 1 is specifically expressed in brain. A further probable isoform is widely expressed outside of brain It is referred to as ERC1a by PubMed:12391317 and characterized by a C-terminus identical to that of isoforms 1 in human and mouse.

The protein localises to the cytoplasm. It localises to the cytoskeleton. It is found in the microtubule organizing center. Its subcellular location is the centrosome. The protein resides in the membrane. The protein localises to the golgi apparatus membrane. It localises to the presynaptic active zone. It is found in the cell projection. Its subcellular location is the podosome. Its function is as follows. Regulatory subunit of the IKK complex. Probably recruits IkappaBalpha/NFKBIA to the complex. May be involved in the organization of the cytomatrix at the nerve terminals active zone (CAZ) which regulates neurotransmitter release. May be involved in vesicle trafficking at the CAZ. May be involved in Rab-6 regulated endosomes to Golgi transport. This is ELKS/Rab6-interacting/CAST family member 1 (Erc1) from Rattus norvegicus (Rat).